The chain runs to 887 residues: Autotaxin (887 aa).

The signal sequence occupies residues 1–27; sequence MARQGCLGSFQVISLFTFAISVNICLG. The propeptide at 28 to 35 is removed by furin; that stretch reads FTASRIKR. Residue Asn-53 is glycosylated (N-linked (GlcNAc...) asparagine). SMB domains are found at residues 54–97 and 98–142; these read TSGS…LKTA and RGWE…GESH. Cystine bridges form between Cys-58–Cys-75, Cys-62–Cys-93, Cys-73–Cys-86, Cys-79–Cys-85, Cys-102–Cys-119, Cys-107–Cys-137, Cys-117–Cys-130, Cys-123–Cys-129, Cys-148–Cys-194, and Cys-156–Cys-350. Residues 126-128 carry the Cell attachment site motif; the sequence is RGD. Residues 144–501 form a phosphodiesterase region; sequence VDDDCEEIKV…PTFKYRTKVP (358 aa). Asp-171 and Thr-209 together coordinate Zn(2+). The Nucleophile role is filled by Thr-209. Residues Thr-209, Asn-230, and Asp-311 each coordinate 1-(9Z-octadecenoyl)-sn-glycero-3-phosphate. Residues Thr-209, Asn-230, and Asp-311 each contribute to the 1-hexadecanoyl-sn-glycero-3-phosphate site. 1-tetradecanoyl-sn-glycerol 3-phosphate is bound by residues Thr-209, Asn-230, and Asp-311. 4 residues coordinate Zn(2+): Asp-311, His-315, Asp-358, and His-359. 5 cysteine pairs are disulfide-bonded: Cys-366/Cys-468, Cys-413/Cys-830, Cys-566/Cys-691, Cys-568/Cys-676, and Cys-799/Cys-809. 2 N-linked (GlcNAc...) asparagine glycosylation sites follow: Asn-398 and Asn-410. His-474 contributes to the Zn(2+) binding site. His-474 contacts 1-(9Z-octadecenoyl)-sn-glycero-3-phosphate. His-474 lines the 1-hexadecanoyl-sn-glycero-3-phosphate pocket. His-474 lines the 1-tetradecanoyl-sn-glycerol 3-phosphate pocket. Asn-524 is a glycosylation site (N-linked (GlcNAc...) asparagine). Over residues 586 to 607 the composition is skewed to basic and acidic residues; it reads HTKGSTEAETGKFRGSKHENKK. Positions 586 to 615 are disordered; that stretch reads HTKGSTEAETGKFRGSKHENKKNLNGSVEP. Asn-610 is a glycosylation site (N-linked (GlcNAc...) asparagine). Residues 622–887 form a nuclease-like domain region; it reads LYGRPAVLYR…TYLHTYESEI (266 aa). Residues Asp-764, Asn-766, Asp-768, Leu-770, and Asp-772 each contribute to the Ca(2+) site. N-linked (GlcNAc...) asparagine glycosylation is present at Asn-831. The required for secretion stretch occupies residues 854–875; that stretch reads IEHLTGLDFYRKTSRSYSEILT.

This sequence belongs to the nucleotide pyrophosphatase/phosphodiesterase family. Requires Zn(2+) as cofactor. Ca(2+) is required as a cofactor. In terms of processing, N-glycosylation, but not furin-cleavage, plays a critical role on secretion and on lysoPLD activity. The interdomain disulfide bond between Cys-413 and Cys-830 is essential for catalytic activity. Abundantly expressed in cerebrum and cerebellum. Localized in secretory epithelial cells in the brain and the eye including choroid plexus epithelial cells, ciliary epithelial cells, iris pigment epithelial cells, and retinal pigment cells.

Its subcellular location is the secreted. The catalysed reaction is a 1-O-alkyl-sn-glycero-3-phosphoethanolamine + H2O = a 1-O-alkyl-sn-glycero-3-phosphate + ethanolamine + H(+). The enzyme catalyses a 1-acyl-sn-glycero-3-phosphoethanolamine + H2O = a 1-acyl-sn-glycero-3-phosphate + ethanolamine + H(+). It catalyses the reaction 1-(9Z-octadecenoyl)-sn-glycero-3-phosphoethanolamine + H2O = 1-(9Z-octadecenoyl)-sn-glycero-3-phosphate + ethanolamine + H(+). It carries out the reaction a 1-O-alkyl-sn-glycero-3-phosphocholine + H2O = a 1-O-alkyl-sn-glycero-3-phosphate + choline + H(+). The catalysed reaction is 1-O-(9Z-octadecenyl)-sn-glycero-3-phosphocholine + H2O = 1-O-(9Z-octadecenyl)-sn-glycero-3-phosphate + choline + H(+). The enzyme catalyses 1-O-hexadecyl-sn-glycero-3-phosphocholine + H2O = 1-O-hexadecyl-sn-glycero-3-phosphate + choline + H(+). It catalyses the reaction a 1-O-(1Z-alkenyl)-sn-glycero-3-phosphocholine + H2O = a 1-O-(1Z-alkenyl)-sn-glycero-3-phosphate + choline + H(+). It carries out the reaction a 1-acyl-sn-glycero-3-phosphocholine + H2O = a 1-acyl-sn-glycero-3-phosphate + choline + H(+). The catalysed reaction is 1-dodecanoyl-sn-glycero-3-phosphocholine + H2O = 1-dodecanoyl-sn-glycerol 3-phosphate + choline + H(+). The enzyme catalyses 1-(9Z-octadecenoyl)-sn-glycero-3-phosphocholine + H2O = 1-(9Z-octadecenoyl)-sn-glycero-3-phosphate + choline + H(+). It catalyses the reaction 1-tetradecanoyl-sn-glycero-3-phosphocholine + H2O = 1-tetradecanoyl-sn-glycerol 3-phosphate + choline + H(+). It carries out the reaction 1-decanoyl-sn-glycero-3-phosphocholine + H2O = 1-decanoyl-sn-glycero-3-phosphate + choline + H(+). The catalysed reaction is 1-octadecanoyl-sn-glycero-3-phosphocholine + H2O = 1-octadecanoyl-sn-glycero-3-phosphate + choline + H(+). The enzyme catalyses 1-hexadecanoyl-sn-glycero-3-phosphocholine + H2O = 1-hexadecanoyl-sn-glycero-3-phosphate + choline + H(+). It catalyses the reaction 1-hexanoyl-sn-glycero-3-phosphocholine + H2O = 1-hexanoyl-sn-glycero-3-phosphate + choline + H(+). It carries out the reaction 1-(9Z,12Z)-octadecadienoyl-sn-glycero-3-phosphocholine + H2O = 1-(9Z,12Z)-octadecadienoyl-sn-glycero-3-phosphate + choline + H(+). The catalysed reaction is sphing-4-enine-phosphocholine + H2O = sphing-4-enine 1-phosphate + choline + H(+). The enzyme catalyses 1-(5Z,8Z,11Z,14Z-eicosatetraenoyl)-sn-glycero-3-phosphocholine + H2O = 1-(5Z,8Z,11Z,14Z-eicosatetraenoyl)-sn-glycero-3-phosphate + choline + H(+). It catalyses the reaction a 2-acyl-sn-glycero-3-phosphocholine + H2O = a 2-acyl-sn-glycerol 3-phosphate + choline + H(+). It carries out the reaction a 1,2-diacyl-sn-glycero-3-phosphocholine + H2O = a 1,2-diacyl-sn-glycero-3-phosphate + choline + H(+). The catalysed reaction is 1,2-dioctanoyl-sn-glycero-3-phosphocholine + H2O = 1,2-dioctanoyl-sn-glycero-3-phosphate + choline + H(+). The enzyme catalyses 1,2-didecanoyl-sn-glycero-3-phosphocholine + H2O = 1,2-didecanoyl-sn-glycero-3-phosphate + choline + H(+). It catalyses the reaction a 1-acyl-sn-glycero-3-phospho-L-serine + H2O = a 1-acyl-sn-glycero-3-phosphate + L-serine + H(+). It carries out the reaction 1-(9Z-octadecenoyl)-sn-glycero-3-phospho-L-serine + H2O = 1-(9Z-octadecenoyl)-sn-glycero-3-phosphate + L-serine + H(+). The catalysed reaction is a 2-acyl-sn-glycero-3-phospho-L-serine + H2O = a 2-acyl-sn-glycerol 3-phosphate + L-serine + H(+). Inhibited by vanadate. Inhibited by micromolar levels of bile salts, such as tauroursodeoxycholate. Not inhibited by taurodeoxycholate. Not inhibited by hydroxysterols, such as 7-hydroxycholesterol, testosterone, dexamethasone and prednisolone. Inhibited by EDTA and EGTA. Secreted lysophospholipase D that hydrolyzes lysophospholipids to produce the signaling molecule lysophosphatidic acid (LPA) in extracellular fluids. Its major substrate is lysophosphatidylcholine. Can also act on sphingosylphosphorylcholine producing sphingosine-1-phosphate, a modulator of cell motility. Can hydrolyze, in vitro, bis-pNPP, to some extent pNP-TMP, and barely ATP. Involved in several motility-related processes such as angiogenesis and neurite outgrowth. Acts as an angiogenic factor by stimulating migration of smooth muscle cells and microtubule formation. Stimulates migration of melanoma cells, probably via a pertussis toxin-sensitive G protein. May have a role in induction of parturition. Possible involvement in cell proliferation and adipose tissue development. Required for LPA production in activated platelets, cleaves the sn-1 lysophospholipids to generate sn-1 lysophosphatidic acids containing predominantly 18:2 and 20:4 fatty acids. Shows a preference for the sn-1 to the sn-2 isomer of 1-O-alkyl-sn-glycero-3-phosphocholine (lyso-PAF). The protein is Autotaxin of Rattus norvegicus (Rat).